The primary structure comprises 222 residues: NADH dehydrogenase [ubiquinone] iron-sulfur protein 8-A, mitochondrial (222 aa).

4Fe-4S ferredoxin-type domains are found at residues 114-143 and 153-182; these read RRYP…IEAE and TRYD…EGPN. [4Fe-4S] cluster contacts are provided by cysteine 123, cysteine 126, cysteine 129, cysteine 133, cysteine 162, cysteine 165, cysteine 168, and cysteine 172.

Belongs to the complex I 23 kDa subunit family. As to quaternary structure, complex I is composed of at least 49 different subunits. This is a component of the iron-sulfur (IP) fragment of the enzyme. [4Fe-4S] cluster is required as a cofactor.

The protein resides in the mitochondrion. It carries out the reaction a ubiquinone + NADH + 5 H(+)(in) = a ubiquinol + NAD(+) + 4 H(+)(out). Functionally, core subunit of the mitochondrial membrane respiratory chain NADH dehydrogenase (Complex I) that is believed to belong to the minimal assembly required for catalysis. Complex I functions in the transfer of electrons from NADH to the respiratory chain. The immediate electron acceptor for the enzyme is believed to be ubiquinone. May donate electrons to ubiquinone. This is NADH dehydrogenase [ubiquinone] iron-sulfur protein 8-A, mitochondrial from Arabidopsis thaliana (Mouse-ear cress).